The sequence spans 369 residues: MVWAPLGPPRTDCLTLLHTPSKDSPKMSLEWLVAWSWSLDGLRDCIATGIQSVRDCDTTAVITVACLLVLFVWYCYHVGREQPRPYVSVNSLMQAADANGLQNGYVYCQSPECVRCTHNEGLNQKLYHNLQEYAKRYSWSGMGRIHKGIREQGRYLNSRPSIQKPEVFFLPDLPTTPYFSRDAQKHDVEVLERNFQTILCEFETLYKAFSNCSLPQGWKMNSTPSGEWFTFYLVNQGVCVPRNCRKCPRTYRLLGSLRTCIGNNVFGNACISVLSPGTVITEHYGPTNIRIRCHLGLKTPNGCELVVGGEPQCWAEGRCLLFDDSFLHAAFHEGSAEDGPRVVFMVDLWHPNVAAAERQALDFIFAPGR.

At 1 to 58 (MVWAPLGPPRTDCLTLLHTPSKDSPKMSLEWLVAWSWSLDGLRDCIATGIQSVRDCDT) the chain is on the cytoplasmic side. Residues 59–79 (TAVITVACLLVLFVWYCYHVG) form a helical membrane-spanning segment. At 80–369 (REQPRPYVSV…ALDFIFAPGR (290 aa)) the chain is on the lumenal side. The N-linked (GlcNAc...) asparagine glycan is linked to Asn211. The 2-oxoglutarate site is built by Trp228 and Ser272. His283 contacts Fe cation. 292–294 (RCH) contacts 2-oxoglutarate. Residue His328 coordinates Fe cation. 2-oxoglutarate is bound at residue Arg341.

The protein belongs to the aspartyl/asparaginyl beta-hydroxylase family. Requires Fe cation as cofactor.

It is found in the membrane. May function as 2-oxoglutarate-dependent dioxygenase. This Homo sapiens (Human) protein is Aspartate beta-hydroxylase domain-containing protein 2 (ASPHD2).